We begin with the raw amino-acid sequence, 380 residues long: Alpha-N-acetylneuraminate alpha-2,8-sialyltransferase ST8SIA3 (380 aa).

Topologically, residues 1–9 (MRNCKMARV) are cytoplasmic. A helical; Signal-anchor for type II membrane protein transmembrane segment spans residues 10 to 33 (ASVLGLVMLSVALLILSLISYVSL). Residues 34 to 380 (KKENIFTTPK…LTKLTLSHCA (347 aa)) are Lumenal-facing. 3 N-linked (GlcNAc...) asparagine glycosylation sites follow: asparagine 93, asparagine 113, and asparagine 160. 2 cysteine pairs are disulfide-bonded: cysteine 162–cysteine 313 and cysteine 176–cysteine 379. The CMP-N-acetyl-beta-neuraminate site is built by asparagine 167 and asparagine 190. Residue asparagine 206 is glycosylated (N-linked (GlcNAc...) asparagine). Residues serine 300, threonine 301, glycine 302, tryptophan 322, tyrosine 336, and histidine 337 each contribute to the CMP-N-acetyl-beta-neuraminate site. Residue histidine 354 is the Proton donor/acceptor of the active site.

Belongs to the glycosyltransferase 29 family. Homodimer. Post-translationally, autopolysialylated. As to expression, expressed in fetal and adult brain and fetal liver.

The protein resides in the golgi apparatus membrane. It catalyses the reaction [N-acetyl-alpha-D-neuraminosyl-(2-&gt;8)](n) + CMP-N-acetyl-beta-neuraminate = [N-acetyl-alpha-D-neuraminosyl-(2-&gt;8)](n+1) + CMP + H(+). The catalysed reaction is alpha-Neu5Ac-(2-&gt;3)-beta-D-Gal-(1-&gt;4)-6S-D-GlcNAc + CMP-N-acetyl-beta-neuraminate = alpha-Neu5Ac-(2-&gt;8)-alpha-Neu5Ac-(2-&gt;3)-beta-D-Gal-(1-&gt;4)-6S-D-GlcNAc + CMP + H(+). It carries out the reaction a ganglioside GM3 (d18:1(4E)) + CMP-N-acetyl-beta-neuraminate = a ganglioside GD3 (d18:1(4E)) + CMP + H(+). The enzyme catalyses a ganglioside GM3 + CMP-N-acetyl-beta-neuraminate = a ganglioside GD3 + CMP + H(+). It catalyses the reaction an N-acetyl-alpha-neuraminyl-(2-&gt;3)-beta-D-galactosyl derivative + CMP-N-acetyl-beta-neuraminate = an N-acetyl-alpha-neuraminyl-(2-&gt;8)-N-acetyl-alpha-neuraminyl-(2-&gt;3)-beta-D-galactosyl derivative + CMP + H(+). The catalysed reaction is an N-acetyl-alpha-neuraminyl-(2-&gt;3)-beta-D-galactosyl-(1-&gt;4)-N-acetyl-beta-D-glucosaminyl derivative + CMP-N-acetyl-beta-neuraminate = an alpha-Neu5Ac-(2-&gt;8)-alpha-Neu5Ac-(2-&gt;3)-beta-D-Gal-(1-&gt;4)-beta-D-GlcNAc derivative + CMP + H(+). The protein operates within protein modification; protein glycosylation. Its function is as follows. Catalyzes the transfer of sialic acid from a CMP-linked sialic acid donor onto a terminal alpha-2,3-, alpha-2,6-, or alpha-2,8-linked sialic acid of an acceptor, such as N-linked oligosaccharides of glycoproteins and glycolipids through alpha-2,8-linkages. Forms oligosialic and polysialic acid on various sialylated N-acetyllactosamine oligosaccharides of glycoproteins, including FETUB N-glycans, a2-HS-glycoprotein (AHSG) and alpha 2,3-sialylated glycosphingolipids, such as alpha 2,3-sialylparagloboside and ganglioside GM3 and to a lesser extent NCAM1 N-glycans. However, it is much more specific to N-linked oligosaccharides of glycoproteins than glycosphingolipids. 2,3-sialylparagloboside serves as the best acceptor substrate among the glycolipids. alpha-Neu5Ac-(2-&gt;8)-alpha-Neu5Ac-(2-&gt;3)-beta-D-Gal-(1-&gt;4)-6S-D-GlcNAc and monosialyl and disialyl N-acetyllactosamines are the best acceptor substrates among glycoproteins. May plays critical role in the striatum by mediating the formation of disialylated and trisialylated terminal glycotopes on N- and O-glycans of specific striatal proteins, regulating their distribution in lipid rafts, affecting their interaction with other binding partners, and subsequently modulating striatal functions. In Homo sapiens (Human), this protein is Alpha-N-acetylneuraminate alpha-2,8-sialyltransferase ST8SIA3.